Reading from the N-terminus, the 350-residue chain is MKTQLKGDRVLAEKEAVAEFYKTGYFGRPKGEGLELSLVEAAFLLSRGKLEIELEGTMLDFRYFFEQASLRQPNFELKYIVYKDLKERGYYVQPSAADFRVYPRGSHPGKSAARIFVHVQSERQLLPVKLLQDSVISAENVHKQFILAVVDEESDLTFYEVKTAVPKGEMTEPYPAIKTDATFLEDRVIAWDAQASETLYKRGFYGKMLDSERLQLSLVESLYLFSRGIITVRDRKGKVFSFDEFIEKASEIESFFLRKYSAYKNLRDSGHVVKTGFKFGTNFRVYRKVESIEKIPHSEYLVNAIPADFEFRLSVMSGAVRLANSVRKKMLFAVEKDEEIEYLDISRTKM.

Active-site residues include Y286, H297, and K328.

It belongs to the tRNA-intron endonuclease family. Archaeal long subfamily. Homodimer.

The enzyme catalyses pretRNA = a 3'-half-tRNA molecule with a 5'-OH end + a 5'-half-tRNA molecule with a 2',3'-cyclic phosphate end + an intron with a 2',3'-cyclic phosphate and a 5'-hydroxyl terminus.. Functionally, endonuclease that removes tRNA introns. Cleaves pre-tRNA at the 5'- and 3'-splice sites to release the intron. The products are an intron and two tRNA half-molecules bearing 2',3' cyclic phosphate and 5'-OH termini. Recognizes a pseudosymmetric substrate in which 2 bulged loops of 3 bases are separated by a stem of 4 bp. This chain is tRNA-splicing endonuclease, found in Methanosarcina barkeri (strain Fusaro / DSM 804).